The chain runs to 273 residues: Phosphatidylglycerol--prolipoprotein diacylglyceryl transferase (273 aa).

Transmembrane regions (helical) follow at residues 21-41 (ISVRWYGLMYLVGFMFALWLA), 60-80 (LLFAGFLGVVLGGRIGYVLFY), 95-115 (VWTGGMSFHGGLLGVITAMLW), 124-144 (FFGVADMIAPLVPFGLGMGRM), 176-196 (SQLYEMALEGIVLFFILNWFI), 203-223 (GSVSGLFLAGYGTFRFLVEYV), and 236-256 (FISMGQILSLPMVIIGVLMMV). An a 1,2-diacyl-sn-glycero-3-phospho-(1'-sn-glycerol)-binding site is contributed by arginine 143.

This sequence belongs to the Lgt family.

It localises to the cell inner membrane. It catalyses the reaction L-cysteinyl-[prolipoprotein] + a 1,2-diacyl-sn-glycero-3-phospho-(1'-sn-glycerol) = an S-1,2-diacyl-sn-glyceryl-L-cysteinyl-[prolipoprotein] + sn-glycerol 1-phosphate + H(+). It functions in the pathway protein modification; lipoprotein biosynthesis (diacylglyceryl transfer). Functionally, catalyzes the transfer of the diacylglyceryl group from phosphatidylglycerol to the sulfhydryl group of the N-terminal cysteine of a prolipoprotein, the first step in the formation of mature lipoproteins. The protein is Phosphatidylglycerol--prolipoprotein diacylglyceryl transferase of Vibrio atlanticus (strain LGP32) (Vibrio splendidus (strain Mel32)).